Reading from the N-terminus, the 328-residue chain is Cytochrome c biogenesis protein CcsA (328 aa).

8 helical membrane-spanning segments follow: residues 13-33 (ISFS…LVNL), 46-66 (GIII…IFSG), 73-93 (LYES…VSYF), 101-121 (LNAI…SGLL), 146-166 (MILG…LLVI), 234-254 (IISL…VWAN), 263-283 (WDPK…YLHI), and 295-315 (AIVA…VNLL).

It belongs to the CcmF/CycK/Ccl1/NrfE/CcsA family. May interact with Ccs1.

It localises to the plastid. The protein localises to the chloroplast thylakoid membrane. Functionally, required during biogenesis of c-type cytochromes (cytochrome c6 and cytochrome f) at the step of heme attachment. In Olimarabidopsis pumila (Dwarf rocket), this protein is Cytochrome c biogenesis protein CcsA.